Here is a 221-residue protein sequence, read N- to C-terminus: Translation initiation factor 6 (221 aa).

This sequence belongs to the eIF-6 family.

Its function is as follows. Binds to the 50S ribosomal subunit and prevents its association with the 30S ribosomal subunit to form the 70S initiation complex. The polypeptide is Translation initiation factor 6 (Halorubrum lacusprofundi (strain ATCC 49239 / DSM 5036 / JCM 8891 / ACAM 34)).